A 287-amino-acid polypeptide reads, in one-letter code: Formamidopyrimidine-DNA glycosylase (287 aa).

Residue Pro2 is the Schiff-base intermediate with DNA of the active site. Catalysis depends on Glu3, which acts as the Proton donor. Lys58 (proton donor; for beta-elimination activity) is an active-site residue. Positions 104, 123, and 166 each coordinate DNA. The segment at 251–287 (RVYDREGQPCPTPGCKGMIGREVQAGRSTFFCPVCQV) adopts an FPG-type zinc-finger fold. The Proton donor; for delta-elimination activity role is filled by Arg277.

The protein belongs to the FPG family. In terms of assembly, monomer. Requires Zn(2+) as cofactor.

It catalyses the reaction Hydrolysis of DNA containing ring-opened 7-methylguanine residues, releasing 2,6-diamino-4-hydroxy-5-(N-methyl)formamidopyrimidine.. It carries out the reaction 2'-deoxyribonucleotide-(2'-deoxyribose 5'-phosphate)-2'-deoxyribonucleotide-DNA = a 3'-end 2'-deoxyribonucleotide-(2,3-dehydro-2,3-deoxyribose 5'-phosphate)-DNA + a 5'-end 5'-phospho-2'-deoxyribonucleoside-DNA + H(+). Involved in base excision repair of DNA damaged by oxidation or by mutagenic agents. Acts as a DNA glycosylase that recognizes and removes damaged bases. Has a preference for oxidized purines, such as 7,8-dihydro-8-oxoguanine (8-oxoG). Has AP (apurinic/apyrimidinic) lyase activity and introduces nicks in the DNA strand. Cleaves the DNA backbone by beta-delta elimination to generate a single-strand break at the site of the removed base with both 3'- and 5'-phosphates. This is Formamidopyrimidine-DNA glycosylase from Caulobacter sp. (strain K31).